Reading from the N-terminus, the 422-residue chain is Ribonuclease Y (422 aa).

In terms of domain architecture, KH spans 112–172 (TTNIVKLPSD…IRREIATRTL (61 aa)). Residues 238 to 331 (VLAHSIEVAK…VAIADSISAS (94 aa)) enclose the HD domain.

This sequence belongs to the RNase Y family.

Its function is as follows. Endoribonuclease that initiates mRNA decay. This chain is Ribonuclease Y, found in Mycoplasma mycoides.